Here is a 284-residue protein sequence, read N- to C-terminus: Bifunctional protein FolD (284 aa).

NADP(+) contacts are provided by residues 165–167, Ser190, and Ile231; that span reads GAS.

It belongs to the tetrahydrofolate dehydrogenase/cyclohydrolase family. Homodimer.

The enzyme catalyses (6R)-5,10-methylene-5,6,7,8-tetrahydrofolate + NADP(+) = (6R)-5,10-methenyltetrahydrofolate + NADPH. It carries out the reaction (6R)-5,10-methenyltetrahydrofolate + H2O = (6R)-10-formyltetrahydrofolate + H(+). The protein operates within one-carbon metabolism; tetrahydrofolate interconversion. Catalyzes the oxidation of 5,10-methylenetetrahydrofolate to 5,10-methenyltetrahydrofolate and then the hydrolysis of 5,10-methenyltetrahydrofolate to 10-formyltetrahydrofolate. The chain is Bifunctional protein FolD from Polynucleobacter necessarius subsp. necessarius (strain STIR1).